The chain runs to 459 residues: Ribulose bisphosphate carboxylase large chain (459 aa).

The residue at position 4 (Lys-4) is an N6,N6,N6-trimethyllysine. Substrate-binding residues include Asn-113 and Thr-163. The active-site Proton acceptor is Lys-165. Lys-167 lines the substrate pocket. Mg(2+) contacts are provided by Lys-191, Asp-193, and Glu-194. Lys-191 is subject to N6-carboxylysine. His-284 serves as the catalytic Proton acceptor. The substrate site is built by Arg-285, His-317, and Ser-369.

Belongs to the RuBisCO large chain family. Type I subfamily. In terms of assembly, heterohexadecamer of 8 large chains and 8 small chains; disulfide-linked. The disulfide link is formed within the large subunit homodimers. It depends on Mg(2+) as a cofactor. In terms of processing, the disulfide bond which can form in the large chain dimeric partners within the hexadecamer appears to be associated with oxidative stress and protein turnover.

The protein resides in the plastid. It localises to the chloroplast. It carries out the reaction 2 (2R)-3-phosphoglycerate + 2 H(+) = D-ribulose 1,5-bisphosphate + CO2 + H2O. It catalyses the reaction D-ribulose 1,5-bisphosphate + O2 = 2-phosphoglycolate + (2R)-3-phosphoglycerate + 2 H(+). Its function is as follows. RuBisCO catalyzes two reactions: the carboxylation of D-ribulose 1,5-bisphosphate, the primary event in carbon dioxide fixation, as well as the oxidative fragmentation of the pentose substrate in the photorespiration process. Both reactions occur simultaneously and in competition at the same active site. This chain is Ribulose bisphosphate carboxylase large chain, found in Micranthes integrifolia (Wholeleaf saxifrage).